A 405-amino-acid polypeptide reads, in one-letter code: Protochlorophyllide reductase A, chloroplastic (405 aa).

Residues 1–69 constitute a chloroplast transit peptide; that stretch reads MALQAASLVS…LRNNKAIIRA (69 aa).

Belongs to the short-chain dehydrogenases/reductases (SDR) family. POR subfamily. As to quaternary structure, forms large complexes including TOC33, pPORA and OEP161 during pPORA import into plastids at the plastid envelope membrane. Interacts with CPP1 during plastid import. In terms of tissue distribution, expressed in young seedlings. Not detected in leaves.

It localises to the plastid. Its subcellular location is the chloroplast. The enzyme catalyses chlorophyllide a + NADP(+) = protochlorophyllide a + NADPH + H(+). It functions in the pathway porphyrin-containing compound metabolism; chlorophyll biosynthesis. Phototransformation of protochlorophyllide (Pchlide) to chlorophyllide (Chlide). PORA may also function as a photoprotectant during the transitory stage from dark to light. Functions in skotomorphogenesis, photomorphogenesis and throughout the plant life under specific light conditions. This Arabidopsis thaliana (Mouse-ear cress) protein is Protochlorophyllide reductase A, chloroplastic (PORA).